We begin with the raw amino-acid sequence, 360 residues long: C-C chemokine receptor-like 2 (360 aa).

Topologically, residues 1–42 (MDNYTVAPDDEYDVLILDDYLDNSGPDQVPAPEFLSPQQVLQ) are extracellular. A glycan (N-linked (GlcNAc...) asparagine) is linked at Asn3. A helical transmembrane segment spans residues 43 to 63 (FCCAVFAVGLLDNVLAVFILV). The Cytoplasmic portion of the chain corresponds to 64–73 (KYKGLKNLGN). A helical transmembrane segment spans residues 74-94 (IYFLNLALSNLCFLLPLPFWA). At 95–109 (HTAAHGESPGNGTCK) the chain is on the extracellular side. A glycan (N-linked (GlcNAc...) asparagine) is linked at Asn105. Cys108 and Cys185 are joined by a disulfide. Residues 110–130 (VLVGLHSSGLYSEVFSNILLL) traverse the membrane as a helical segment. Residues 131–141 (VQGYRVFSQGR) are Cytoplasmic-facing. The chain crosses the membrane as a helical span at residues 142–162 (LASIFTTVSCGIVACILAWAM). The Extracellular portion of the chain corresponds to 163–202 (ATALSLPESVFYEPRMERQKHKCAFGKPHFLPIEAPLWKY). The chain crosses the membrane as a helical span at residues 203–223 (VLTSKMIILVLAFPLLVFIIC). At 224–243 (CRQLRRRQSFRERQYDLHKP) the chain is on the cytoplasmic side. The chain crosses the membrane as a helical span at residues 244-264 (ALVITGVFLLMWAPYNTVLFL). The Extracellular segment spans residues 265–285 (SAFQEHLSLQDEKSSYHLDAS). A helical transmembrane segment spans residues 286 to 307 (VQVTQLVATTHCCVNPLLYLLL). The Cytoplasmic portion of the chain corresponds to 308–360 (DRKAFMRYLRSLFPRCNDIPYQSSGGYQQAPPREGHGRPIELYSNLHQRQDII).

The protein belongs to the G-protein coupled receptor 1 family. Expressed in macrophages, astrocytes, in glial cells. Constitutively expressed by mast cells. Detected in bronchial epithelium in OVA-induced airway inflammation. Up-regulated during dendritic cell (DC) maturation.

It is found in the cell membrane. Receptor for CCL19 and chemerin/RARRES2. Does not appear to be a signaling receptor, but may have a role in modulating chemokine-triggered immune responses by capturing and internalizing CCL19 or by presenting RARRES2 ligand to CMKLR1, a functional signaling receptor. Plays a critical role for the development of Th2 responses. This chain is C-C chemokine receptor-like 2 (Ccrl2), found in Mus musculus (Mouse).